The chain runs to 211 residues: V-type ATP synthase subunit D (211 aa).

The protein belongs to the V-ATPase D subunit family.

Produces ATP from ADP in the presence of a proton gradient across the membrane. The chain is V-type ATP synthase subunit D from Fusobacterium nucleatum subsp. nucleatum (strain ATCC 25586 / DSM 15643 / BCRC 10681 / CIP 101130 / JCM 8532 / KCTC 2640 / LMG 13131 / VPI 4355).